Consider the following 312-residue polypeptide: Small ribosomal subunit protein uS2m (312 aa).

Belongs to the universal ribosomal protein uS2 family.

It is found in the mitochondrion. The polypeptide is Small ribosomal subunit protein uS2m (RPS2) (Acanthamoeba castellanii (Amoeba)).